A 311-amino-acid chain; its full sequence is tRNA dimethylallyltransferase (311 aa).

13–20 (GPTASGKT) is an ATP binding site. 15-20 (TASGKT) lines the substrate pocket. 2 interaction with substrate tRNA regions span residues 38 to 41 (DSMQ) and 166 to 170 (QRGLR).

Belongs to the IPP transferase family. As to quaternary structure, monomer. Requires Mg(2+) as cofactor.

It carries out the reaction adenosine(37) in tRNA + dimethylallyl diphosphate = N(6)-dimethylallyladenosine(37) in tRNA + diphosphate. In terms of biological role, catalyzes the transfer of a dimethylallyl group onto the adenine at position 37 in tRNAs that read codons beginning with uridine, leading to the formation of N6-(dimethylallyl)adenosine (i(6)A). This chain is tRNA dimethylallyltransferase, found in Staphylococcus aureus (strain MSSA476).